The chain runs to 2138 residues: MSGRRCDRRLNVQKVSAADELETKLGFGLFSQGETRLGWLLTFASSSWEDADTGKTFSCVDLFFVTQDGSSFKTKYKFRPYLYAATKDNMELEVEAYLRRRYERQVADIQIVHKEDLYLKNHLSGLQKKYLKVSFDTVQQLVEVKRDLLHIVERNLAKFNALEAYESILSGKREQRPQDCLDSVVDLREYDVPYHVRFAIDNDVRSGQWYNVSISSTDVILEKRTDLLQRAEVRVCAFDIETVKLPLKFPDAEYDQIMMISYMVDGQGFLITNRECVGKDIEDLEYTPKPEFEGYFKVTNVTNEVELLRKWFSHMQELKPGIYVTYNGDFFDWPFIERRASHHGIKMNEELGFRCDQNQGECRAKFVCHLDCFSWVKRDSYLPQGSQGLKAVTKVKLGYDPLEVNPEDMVRFAMEKPQTMASYSVSDAVATYYLYMTYVHPFVFSLATIIPMVPDEVLRKGSGTLCEMLLMVEAYKANVVCPNKNQADPEKFYQGKLLESETYIGGHVECLQSGVFRSDIPTSFKLDASAYQQLIDNLGRDLEYAITVEGKMRMDSVSNFDEVKEVIREKLEKLRDDPIREEGPLIYHLDVAAMYPNIILTNRLQPPSIVTDEVCTACDFNGPEKTCLRKLEWVWRGVTFKGNKSEYYHLKKQIESESVDAGANMQSSKPFLDLPKVEQQSKLKERLKKYCQKAYSRVLDKPITEVREAGICMRENPFYVDTVRSFRDRRYEYKTLNKVWKGKLSEAKASGNLIKIQEAHDMVVVYDSLQLAHKCILNSFYGYVMRKGARWYSMEMAGVVTYTGAKIIQNARLLIERIGKPLELDTDGIWCALPGSFPENFTFKTIDMKKFTISYPCVILNVDVAKNNSNDQYQTLVDPVRKTYNSRSECSIEFEVDGPYKAMIIPASKEEGILIKKRYAVFNHDGTIAELKGFEMKRRGELKLIKVFQAELFDKFLHGSTLEECYSAVAAVANRWLDLLEGQGKDIADSELLDYISESSTMSKSLADYGQQKSCAVTTAKRLADFLGDTMVKDKGLRCQYIVAREPEGTPVSERAVPVAIFQTDDPEKKFYLQKWCKISSYTGIRSIIDWMYYKQRLHSAIQKVITIPAAMQKVANPVLRVRHPYWLEKKVCDKFRQGKIVDMFSSANKDHSTTQDNVVADIEEFCKENRPSVKGPKPVARSFEVDRNHSEGKQQESWDPEFHDISLQNVDKNVDYQGWLELEKRKWKMTLTNKKKRRYSSSLFGFDLEQNINKKVCKGRVGVGSYFRRPEEALTSSYLQIIQLVQSPQSGQFFAWVVVEGLMLKIPLTIPRVFYINSKASIAGNFTGKCINKILPHGKPCYNLMEVNIQEDQFIKESKKLAALLADPEIEGIYETKMPLEFSAICQIGCVCKIEDTAKHRNTQDGWKLGELHRITTTECRYLENSIPLVYLYHSTSTGRAVYVLYCHASKLMSVVVVNPYGDKELLSSALERQFRDRCQELSPEPFSWDGILFQVEYVDHPEAATKFLQKALCEYREENCGATVAVIECPDFNTTKEGVKALEDFPCVRIPFNDDDNSYQPVSWQRPAAKIAVLRCASAIQWLDRRIAQSRYAHVPLGNFGRDWLTFTVDIFLSRALRDQQQVLWVSDNGVPDLGDINNEETFLADETSLLFPGAYRKVSVELKVHRLAVNALLKSDLVSEMEGGGFLGVNSRGSSLNDNGSFDENNGCAQAFRVLKQLIKRLLHDACNSGNIYADSILQHLSWWLRSPSSKLHDPALHLMLHKVMQKVFALLLTDLRRLGAIIIYADFSKVIIDTGKFDLSAAKTYCESLLTVMGSRDIFKLILLEPVHYWHSLLFMDQHNYAGIRATGDEISGNEVTIEPKWSVARHLPEYIQKDFIIIVATFIFGPWKFALEKKRGSAESLEAEMVEYLKEQIGTRFISMIVEKIGNIRSHIKDINVSDASWASGQAPKGDYTFEFIQIITAVLALDQNVQQDVLVMRKILLKYIKVKECAAEAEFIDPGPSFILPNVACSNCGAYRDLDFCRDSALLTEKEWSCADPQCVKIYDKEQIESSIIQMVRQRERMYQLQDLVCNRCNQVKAAHLTEQCECSGSFRCKESGSDFHKRIEIFLDIAKRQKFRLLEECISWILFATSC.

A Nuclear localization signal 1 motif is present at residues Glu-1224 to Thr-1231. Zn(2+)-binding residues include Cys-2015, Cys-2018, Cys-2040, and Cys-2045. The CysA-type zinc finger occupies Cys-2015–Cys-2045. Positions 2076, 2079, 2091, and 2093 each coordinate [4Fe-4S] cluster. A CysB motif motif is present at residues Cys-2076–Cys-2093. The Nuclear localization signal 2 signature appears at His-2107–Leu-2114.

This sequence belongs to the DNA polymerase type-B family. In terms of assembly, heterotetramer. [4Fe-4S] cluster serves as cofactor. As to expression, mostly expressed at low levels in inflorescence (floral meristem and flowers until anthesis), and, to a lower extent, in seeds.

Its subcellular location is the nucleus. The catalysed reaction is DNA(n) + a 2'-deoxyribonucleoside 5'-triphosphate = DNA(n+1) + diphosphate. Its function is as follows. DNA polymerase II, which participates in chromosomal DNA replication. Involved in the determination of cell fate during plant embryogenesis. Contributes to the flowering time repression. This chain is DNA polymerase epsilon catalytic subunit B (POL2B), found in Arabidopsis thaliana (Mouse-ear cress).